An 845-amino-acid chain; its full sequence is Protein translocase subunit SecA (845 aa).

ATP contacts are provided by residues Gln88, 106 to 110 (GEGKT), and Asp495. The tract at residues 804–838 (SNRANRPQKKAKRQPIVKPDKPGRNDPCPCGSGKK) is disordered. A compositionally biased stretch (basic residues) spans 809–818 (RPQKKAKRQP). Zn(2+) is bound by residues Cys831, Cys833, Cys842, and Cys843.

This sequence belongs to the SecA family. In terms of assembly, monomer and homodimer. Part of the essential Sec protein translocation apparatus which comprises SecA, SecYEG and auxiliary proteins SecDF. Other proteins may also be involved. It depends on Zn(2+) as a cofactor.

It localises to the cell inner membrane. Its subcellular location is the cytoplasm. The enzyme catalyses ATP + H2O + cellular proteinSide 1 = ADP + phosphate + cellular proteinSide 2.. In terms of biological role, part of the Sec protein translocase complex. Interacts with the SecYEG preprotein conducting channel. Has a central role in coupling the hydrolysis of ATP to the transfer of proteins into and across the cell membrane, serving as an ATP-driven molecular motor driving the stepwise translocation of polypeptide chains across the membrane. The polypeptide is Protein translocase subunit SecA (Halothermothrix orenii (strain H 168 / OCM 544 / DSM 9562)).